Consider the following 208-residue polypeptide: Small ribosomal subunit protein uS4 (208 aa).

Positions 98–161 constitute an S4 RNA-binding domain; it reads RRLDNVIYRM…KELEIIKESL (64 aa).

This sequence belongs to the universal ribosomal protein uS4 family. Part of the 30S ribosomal subunit. Contacts protein S5. The interaction surface between S4 and S5 is involved in control of translational fidelity.

Functionally, one of the primary rRNA binding proteins, it binds directly to 16S rRNA where it nucleates assembly of the body of the 30S subunit. With S5 and S12 plays an important role in translational accuracy. The protein is Small ribosomal subunit protein uS4 of Thermodesulfovibrio yellowstonii (strain ATCC 51303 / DSM 11347 / YP87).